The chain runs to 460 residues: UDP-glycosyltransferase 74B1 (460 aa).

Residue His-22 is the Proton acceptor of the active site. His-22 contributes to the an anthocyanidin binding site. The active-site Charge relay is the Asp-113. The UDP-alpha-D-glucose site is built by Thr-135, Gln-339, His-354, Trp-357, Asn-358, Ser-359, Glu-362, Asp-378, and Gln-379.

The protein belongs to the UDP-glycosyltransferase family. In terms of tissue distribution, expressed in the vasculature, the apical meristems of roots, shoots and inflorescence, and the junction of organ or branches.

The catalysed reaction is (Z)-2-phenyl-1-thioacetohydroximate + UDP-alpha-D-glucose = (Z)-desulfoglucotropeolin + UDP. It carries out the reaction a (Z)-omega-(methylsulfanyl)alkyl-thiohydroximate + UDP-alpha-D-glucose = an aliphatic (Z)-desulfo-glucosinolate + UDP. The enzyme catalyses (Z)-2-(indol-3-yl)-1-thioacetohydroximate + UDP-alpha-D-glucose = (Z)-indolylmethyl desulfoglucosinolate + UDP. Functionally, involved in the biosynthesis of glucosinolate. In in vitro assay, may use phenylacetothiohydroximate (PATH), but not phenylacetic acid (PAA), indole-3-acetic acid (IAA) or salicylic acid (SA) as substrate. Specific for the thiohydroximate functional group and does not glucosylate the carboxylate group or a hydroxyl group. The polypeptide is UDP-glycosyltransferase 74B1 (UGT74B1) (Arabidopsis thaliana (Mouse-ear cress)).